The primary structure comprises 213 residues: MSTSYSANQYESAFKSQKLQNWTIPKQFKERPSAAEGYTTFIATDRGHLLPGVRTKHRSAWPAFQGTWDLPRRIPPVSMNPTARSQVGQDRLMTWGQMKITTKQAHKGPGDSQAMNRNSHDVENINVDQPAEQSKISIDPDENQPEKPKSQHIQDQSRPASQQAQPIPENLNINQSRPASQRSQKAPSRPATQQNQAEFRPPTHNSRPASQEK.

The disordered stretch occupies residues 127-213 (VDQPAEQSKI…HNSRPASQEK (87 aa)). The segment covering 151 to 213 (QHIQDQSRPA…HNSRPASQEK (63 aa)) has biased composition (polar residues).

It belongs to the Flattop family.

The protein localises to the cytoplasm. It localises to the cytoskeleton. It is found in the cilium basal body. The protein resides in the cell projection. Its subcellular location is the cilium. The protein localises to the apical cell membrane. It localises to the cilium axoneme. In terms of biological role, microtubule inner protein (MIP) part of the dynein-decorated doublet microtubules (DMTs) in cilia axoneme. Acts as a regulator of cilium basal body docking and positioning in mono- and multiciliated cells. Regulates basal body docking and cilia formation in multiciliated lung cells. Regulates kinocilium positioning and stereocilia bundle morphogenesis in the inner ear. The sequence is that of Protein Flattop from Danio rerio (Zebrafish).